We begin with the raw amino-acid sequence, 563 residues long: Arginine--tRNA ligase (563 aa).

A 'HIGH' region motif is present at residues 121-131 (PNIAKPFSIGH).

Belongs to the class-I aminoacyl-tRNA synthetase family. As to quaternary structure, monomer.

The protein resides in the cytoplasm. The catalysed reaction is tRNA(Arg) + L-arginine + ATP = L-arginyl-tRNA(Arg) + AMP + diphosphate. This is Arginine--tRNA ligase from Streptococcus mutans serotype c (strain ATCC 700610 / UA159).